The sequence spans 184 residues: Protein Syd (184 aa).

Belongs to the Syd family.

It is found in the cell inner membrane. Interacts with the SecY protein in vivo. May bind preferentially to an uncomplexed state of SecY, thus functioning either as a chelating agent for excess SecY in the cell or as a regulatory factor that negatively controls the translocase function. This is Protein Syd from Photorhabdus laumondii subsp. laumondii (strain DSM 15139 / CIP 105565 / TT01) (Photorhabdus luminescens subsp. laumondii).